A 685-amino-acid chain; its full sequence is DNA-directed RNA polymerase subunit beta' (685 aa).

Positions 69, 71, 87, and 90 each coordinate Zn(2+). Asp-492, Asp-494, and Asp-496 together coordinate Mg(2+).

This sequence belongs to the RNA polymerase beta' chain family. RpoC1 subfamily. In terms of assembly, in plastids the minimal PEP RNA polymerase catalytic core is composed of four subunits: alpha, beta, beta', and beta''. When a (nuclear-encoded) sigma factor is associated with the core the holoenzyme is formed, which can initiate transcription. Mg(2+) is required as a cofactor. Requires Zn(2+) as cofactor.

The protein resides in the plastid. It is found in the chloroplast. The catalysed reaction is RNA(n) + a ribonucleoside 5'-triphosphate = RNA(n+1) + diphosphate. In terms of biological role, DNA-dependent RNA polymerase catalyzes the transcription of DNA into RNA using the four ribonucleoside triphosphates as substrates. The polypeptide is DNA-directed RNA polymerase subunit beta' (Dioscorea elephantipes (Elephant's foot yam)).